The primary structure comprises 355 residues: Uroporphyrinogen decarboxylase (355 aa).

Substrate contacts are provided by residues Arg27–Arg31, Asp78, Tyr155, Ser210, and His328.

Belongs to the uroporphyrinogen decarboxylase family. As to quaternary structure, homodimer.

Its subcellular location is the cytoplasm. It carries out the reaction uroporphyrinogen III + 4 H(+) = coproporphyrinogen III + 4 CO2. It functions in the pathway porphyrin-containing compound metabolism; protoporphyrin-IX biosynthesis; coproporphyrinogen-III from 5-aminolevulinate: step 4/4. Functionally, catalyzes the decarboxylation of four acetate groups of uroporphyrinogen-III to yield coproporphyrinogen-III. In Azotobacter vinelandii (strain DJ / ATCC BAA-1303), this protein is Uroporphyrinogen decarboxylase.